The following is a 223-amino-acid chain: Small ribosomal subunit protein uS3 (223 aa).

The region spanning 39 to 107 (VREFLKQKLK…PVQVSVEEIR (69 aa)) is the KH type-2 domain.

This sequence belongs to the universal ribosomal protein uS3 family. Part of the 30S ribosomal subunit. Forms a tight complex with proteins S10 and S14.

Functionally, binds the lower part of the 30S subunit head. Binds mRNA in the 70S ribosome, positioning it for translation. The polypeptide is Small ribosomal subunit protein uS3 (Methylococcus capsulatus (strain ATCC 33009 / NCIMB 11132 / Bath)).